The primary structure comprises 131 residues: Fluoride-specific ion channel FluC 1 (131 aa).

4 helical membrane-spanning segments follow: residues 4 to 24 (ILLIGIGGFIGAVLRYSLSGW), 32 to 52 (FPLGTLVVNIVGSFFLGLVMY), 66 to 86 (ILLTIGLLGAFTTLSTFSYES), and 95 to 115 (LMQLTMNIVATVLFSIFAVYL). Positions 74 and 77 each coordinate Na(+).

It belongs to the fluoride channel Fluc/FEX (TC 1.A.43) family.

Its subcellular location is the cell membrane. The enzyme catalyses fluoride(in) = fluoride(out). With respect to regulation, na(+) is not transported, but it plays an essential structural role and its presence is essential for fluoride channel function. Fluoride-specific ion channel. Important for reducing fluoride concentration in the cell, thus reducing its toxicity. The chain is Fluoride-specific ion channel FluC 1 from Methanosarcina acetivorans (strain ATCC 35395 / DSM 2834 / JCM 12185 / C2A).